The following is a 208-amino-acid chain: Pyridoxine/pyridoxamine 5'-phosphate oxidase (208 aa).

FMN is bound by residues 53-58, 68-69, Lys-75, and Gln-100; these read RTVLLK and YS. Lys-58 contacts substrate. Substrate-binding residues include Tyr-118, Arg-122, and Ser-126. Residues 135 to 136 and Trp-180 each bind FMN; that span reads QS. 186–188 contributes to the substrate binding site; that stretch reads RLH. Residue Arg-190 participates in FMN binding.

It belongs to the pyridoxamine 5'-phosphate oxidase family. In terms of assembly, homodimer. FMN is required as a cofactor.

It carries out the reaction pyridoxamine 5'-phosphate + O2 + H2O = pyridoxal 5'-phosphate + H2O2 + NH4(+). The enzyme catalyses pyridoxine 5'-phosphate + O2 = pyridoxal 5'-phosphate + H2O2. It participates in cofactor metabolism; pyridoxal 5'-phosphate salvage; pyridoxal 5'-phosphate from pyridoxamine 5'-phosphate: step 1/1. It functions in the pathway cofactor metabolism; pyridoxal 5'-phosphate salvage; pyridoxal 5'-phosphate from pyridoxine 5'-phosphate: step 1/1. Functionally, catalyzes the oxidation of either pyridoxine 5'-phosphate (PNP) or pyridoxamine 5'-phosphate (PMP) into pyridoxal 5'-phosphate (PLP). In Xylella fastidiosa (strain 9a5c), this protein is Pyridoxine/pyridoxamine 5'-phosphate oxidase.